A 392-amino-acid chain; its full sequence is Chaperone protein DnaJ (392 aa).

The 66-residue stretch at 2–67 folds into the J domain; that stretch reads DYYTILGVAK…QKRESYDRYG (66 aa). The segment at 149-227 adopts a CR-type zinc-finger fold; sequence GVEKELLVSG…CRGQGRIKDK (79 aa). Cys-162, Cys-165, Cys-179, Cys-182, Cys-201, Cys-204, Cys-215, and Cys-218 together coordinate Zn(2+). CXXCXGXG motif repeat units follow at residues 162 to 169, 179 to 186, 201 to 208, and 215 to 222; these read CDACSGSG, CDRCKGSG, CPDCSGEG, and CSVCRGQG.

Belongs to the DnaJ family. In terms of assembly, homodimer. Zn(2+) serves as cofactor.

The protein resides in the cytoplasm. Participates actively in the response to hyperosmotic and heat shock by preventing the aggregation of stress-denatured proteins and by disaggregating proteins, also in an autonomous, DnaK-independent fashion. Unfolded proteins bind initially to DnaJ; upon interaction with the DnaJ-bound protein, DnaK hydrolyzes its bound ATP, resulting in the formation of a stable complex. GrpE releases ADP from DnaK; ATP binding to DnaK triggers the release of the substrate protein, thus completing the reaction cycle. Several rounds of ATP-dependent interactions between DnaJ, DnaK and GrpE are required for fully efficient folding. Also involved, together with DnaK and GrpE, in the DNA replication of plasmids through activation of initiation proteins. The sequence is that of Chaperone protein DnaJ from Chlamydia trachomatis serovar L2 (strain ATCC VR-902B / DSM 19102 / 434/Bu).